A 130-amino-acid chain; its full sequence is Small ribosomal subunit protein uS8 (130 aa).

Belongs to the universal ribosomal protein uS8 family. As to quaternary structure, part of the 30S ribosomal subunit. Contacts proteins S5 and S12.

In terms of biological role, one of the primary rRNA binding proteins, it binds directly to 16S rRNA central domain where it helps coordinate assembly of the platform of the 30S subunit. This Glaesserella parasuis serovar 5 (strain SH0165) (Haemophilus parasuis) protein is Small ribosomal subunit protein uS8.